The following is an 890-amino-acid chain: V-type proton ATPase subunit a, Golgi isoform (890 aa).

An N-acetylmethionine modification is found at M1. The Cytoplasmic segment spans residues 1–450 (MNQEEAIFRS…DAYGIATYKE (450 aa)). Positions 113–154 (LENVNDMVKEITDCESRARQLDESLDSLRSKLNDLLEQRQVI) form a coiled coil. Phosphoserine occurs at positions 223 and 228. Residues 297–347 (LKKVKRVIDSLNGKIVSLNTRSSELVDTLNRQIDDLQRILDTTEQTLHTEL) adopt a coiled-coil conformation. The helical transmembrane segment at 451 to 469 (INAGLATVVTFPFMFAIMF) threads the bilayer. Topologically, residues 470 to 471 (GD) are vacuolar. The chain crosses the membrane as a helical span at residues 472 to 488 (MGHGFILFLMALFLVLN). Topologically, residues 489–502 (ERKFGAMHRDEIFD) are cytoplasmic. Residues 503–532 (MAFTGRYVLLLMGAFSVYTGLLYNDIFSKS) form a helical membrane-spanning segment. Residues 533 to 580 (MTIFKSGWQWPSTFRKGESIEAKKTGVYPFGLDFAWHGTDNGLLFSNS) lie on the Vacuolar side of the membrane. A helical transmembrane segment spans residues 581–600 (YKMKLSILMGYAHMTYSFMF). Residues 601-618 (SYINYRAKNSKVDIIGNF) are Cytoplasmic-facing. Residues 619 to 639 (IPGLVFMQSIFGYLSWAIVYK) traverse the membrane as a helical segment. The Vacuolar segment spans residues 640–682 (WSKDWIKDDKPAPGLLNMLINMFLAPGTIDDQLYSGQAKLQVV). The chain crosses the membrane as a helical span at residues 683-702 (LLLAALVCVPWLLLYKPLTL). The Cytoplasmic portion of the chain corresponds to 703 to 779 (RRLNKNGGGG…DVMIHQVIHT (77 aa)). Residues 780 to 804 (IEFCLNCISHTASYLRLWALSLAHA) traverse the membrane as a helical segment. At 805-828 (QLSSVLWDMTISNAFSSKNSGSPL) the chain is on the vacuolar side. A helical transmembrane segment spans residues 829–867 (AVMKVVFLFAMWFVLTVCILVFMEGTSAMLHALRLHWVE). Topologically, residues 868–890 (AMSKFFEGEGYAYEPFSFRAIIE) are cytoplasmic.

This sequence belongs to the V-ATPase 116 kDa subunit family. As to quaternary structure, V-ATPase is a heteromultimeric enzyme composed of a peripheral catalytic V1 complex (components A to H) attached to an integral membrane V0 proton pore complex (components: a, c, c', c'', d, e, f and VOA1). Glycosylated.

It is found in the endosome membrane. The protein resides in the golgi apparatus membrane. Its function is as follows. Subunit of the V0 complex of vacuolar(H+)-ATPase (V-ATPase), a multisubunit enzyme composed of a peripheral complex (V1) that hydrolyzes ATP and a membrane integral complex (V0) that translocates protons. V-ATPase is responsible for acidifying and maintaining the pH of intracellular compartments. Is present only in Golgi- and endosome-residing V-ATPase complexes; enzymes containing this subunit have a 4-fold lower ratio of proton transport to ATP hydrolysis than complexes containing the vacuolar isoform and do not dissociate V1 and V0 in response to glucose depletion. This chain is V-type proton ATPase subunit a, Golgi isoform (STV1), found in Saccharomyces cerevisiae (strain ATCC 204508 / S288c) (Baker's yeast).